The sequence spans 1500 residues: Rho GTPase-activating protein 35 (1500 aa).

Residues 1–266 are has GTPase activity, required for proper localization; the sequence is MMMARKQDVR…IPYFEALKQQ (266 aa). GTP-binding positions include Lys-28, 33–37, Leu-52, Ser-56, 95–97, 201–203, and 229–231; these read IGKSC, EQT, KCD, and SAR. FF domains are found at residues 270 to 327, 368 to 422, 429 to 483, and 485 to 550; these read IATA…HIHR, KLLE…HLEK, RAEM…HQKQ, and IDKA…HIHF. A Phosphotyrosine modification is found at Tyr-308. Residue Ser-589 is modified to Phosphoserine. The 176-residue stretch at 592–767 folds into the pG1 pseudoGTPase domain; that stretch reads DPNIDRINLV…LLDSKRNLNL (176 aa). Phosphoserine is present on residues Ser-770 and Ser-773. The region spanning 783 to 947 is the pG2 pseudoGTPase domain; the sequence is RIVMCLMCGD…FKDVVDKKNI (165 aa). 5 positions are modified to phosphoserine: Ser-970, Ser-975, Ser-985, Ser-1002, and Ser-1073. The segment at 970–989 is disordered; it reads SPRAGSPLCNSNLQDSEEDI. Positions 1058–1090 are disordered; the sequence is SYLDQGHRDGQRKSVSSSTWLPPDGFDPSDYAE. Tyr-1088 carries the post-translational modification Phosphotyrosine. Tyr-1106 carries the post-translational modification Phosphotyrosine; by ABL2 and PTK6. Residues 1125–1142 show a composition bias toward polar residues; that stretch reads KAQSNGSGNGSDSEMDTS. A disordered region spans residues 1125–1147; it reads KAQSNGSGNGSDSEMDTSSLERG. A phosphoserine mark is found at Ser-1135, Ser-1143, Ser-1151, Ser-1177, Ser-1180, and Ser-1222. The segment at 1178–1208 is disordered; the sequence is VGSDDELGPIRKKEEDQASQGYKGDNAVIPY. Residues 1214-1237 form a required for phospholipid binding and regulation of the substrate preference region; sequence PRRRNILRSLRRNTKKPKPKPRPS. Thr-1227 carries the phosphothreonine modification. Ser-1237 is subject to Phosphoserine. The 188-residue stretch at 1250-1437 folds into the Rho-GAP domain; that stretch reads VPLTTVVTPE…LFIQQCPFFF (188 aa). The segment at 1444-1500 is disordered; it reads EPPGATPSSPSAVASTVPFLTSTPVTSQPSPPQSPPPTPQSPMQALLPSQLQAEHTL. The segment covering 1449–1471 has biased composition (low complexity); it reads TPSSPSAVASTVPFLTSTPVTSQ. A compositionally biased stretch (pro residues) spans 1472-1483; that stretch reads PSPPQSPPPTPQ. Phosphoserine occurs at positions 1473 and 1477. Thr-1481 carries the post-translational modification Phosphothreonine. Ser-1484 carries the post-translational modification Phosphoserine. The segment covering 1490-1500 has biased composition (polar residues); it reads LPSQLQAEHTL.

As to quaternary structure, interacts with RASA1. Interacts with the general transcription factor GTF2I, the interaction sequesters GTF2I in the cytoplasm. Post-translationally, phosphorylation of Tyr-1106 by PTK6 promotes the association with RASA1, inactivating RHOA while activating RAS. Phosphorylation at Tyr-308 by PDGFRA inhibits binding to GTF2I. Phosphorylated by PRKCA at Ser-1222 and Thr-1227, induces relocalization from the cytoplasm to regions of plasma membrane ruffling and prevents the binding and substrate specificity regulation by phospholipids. In brain, phosphorylated by FYN and SRC. During focal adhesion formation, phosphorylated by MAPK1 and MAPK3 at the C-terminal region, probably at Ser-1452, Ser-1477, Thr-1481 and Ser-1484. Phosphorylation by MAPK1 and MAPK3 inhibits GAP function and localizes ARGHAP35 away from newly forming focal adhesions and stress fibers in cells spreading on fibronectin. Phosphorylation at Ser-1477 and Thr-1481 by GSK3B requires priming by MAPK and inhibits RhoGAP activity and modulates polarized cell migration. In terms of tissue distribution, strongly expressed in retina (photoreceptor layer) and brain. Expression is maximal in the occipital, frontal, temporal lobe and also the cerebellum. Medium expression in the medulla and also in kidney, lung, liver, heart and spleen.

Its subcellular location is the cytoplasm. The protein localises to the cytoskeleton. It is found in the cilium basal body. The protein resides in the nucleus. It localises to the cell membrane. Functionally, rho GTPase-activating protein (GAP). Binds several acidic phospholipids which inhibits the Rho GAP activity to promote the Rac GAP activity. This binding is inhibited by phosphorylation by PRKCA. Involved in cell differentiation as well as cell adhesion and migration, plays an important role in retinal tissue morphogenesis, neural tube fusion, midline fusion of the cerebral hemispheres and mammary gland branching morphogenesis. Transduces signals from p21-ras to the nucleus, acting via the ras GTPase-activating protein (GAP). Transduces SRC-dependent signals from cell-surface adhesion molecules, such as laminin, to promote neurite outgrowth. Regulates axon outgrowth, guidance and fasciculation. Modulates Rho GTPase-dependent F-actin polymerization, organization and assembly, is involved in polarized cell migration and in the positive regulation of ciliogenesis and cilia elongation. During mammary gland development, is required in both the epithelial and stromal compartments for ductal outgrowth. Represses transcription of the glucocorticoid receptor by binding to the cis-acting regulatory sequence 5'-GAGAAAAGAAACTGGAGAAACTC-3'; this function is however unclear and would need additional experimental evidences. This is Rho GTPase-activating protein 35 from Canis lupus familiaris (Dog).